Here is a 98-residue protein sequence, read N- to C-terminus: uncharacterized protein (98 aa).

Positions 1-23 (MKKMQSIVLALSLVLVAPMAAQA) are cleaved as a signal peptide. The tract at residues 68 to 98 (WHLHGPPPPPRHHKKAPHDHHGGHGPGKHHR) is disordered. The segment covering 77–98 (PRHHKKAPHDHHGGHGPGKHHR) has biased composition (basic residues).

This sequence to E.coli YpeC.

This is an uncharacterized protein from Escherichia coli (strain K12).